The sequence spans 217 residues: ATP phosphoribosyltransferase (217 aa).

It belongs to the ATP phosphoribosyltransferase family. Short subfamily. In terms of assembly, heteromultimer composed of HisG and HisZ subunits.

Its subcellular location is the cytoplasm. The enzyme catalyses 1-(5-phospho-beta-D-ribosyl)-ATP + diphosphate = 5-phospho-alpha-D-ribose 1-diphosphate + ATP. It participates in amino-acid biosynthesis; L-histidine biosynthesis; L-histidine from 5-phospho-alpha-D-ribose 1-diphosphate: step 1/9. Its function is as follows. Catalyzes the condensation of ATP and 5-phosphoribose 1-diphosphate to form N'-(5'-phosphoribosyl)-ATP (PR-ATP). Has a crucial role in the pathway because the rate of histidine biosynthesis seems to be controlled primarily by regulation of HisG enzymatic activity. The polypeptide is ATP phosphoribosyltransferase (Burkholderia ambifaria (strain MC40-6)).